The primary structure comprises 609 residues: Isocitrate dehydrogenase kinase/phosphatase (609 aa).

ATP-binding positions include 325-331 (APGIKGM) and lysine 346. Aspartate 381 is a catalytic residue.

The protein belongs to the AceK family.

It is found in the cytoplasm. It catalyses the reaction L-seryl-[isocitrate dehydrogenase] + ATP = O-phospho-L-seryl-[isocitrate dehydrogenase] + ADP + H(+). Its function is as follows. Bifunctional enzyme which can phosphorylate or dephosphorylate isocitrate dehydrogenase (IDH) on a specific serine residue. This is a regulatory mechanism which enables bacteria to bypass the Krebs cycle via the glyoxylate shunt in response to the source of carbon. When bacteria are grown on glucose, IDH is fully active and unphosphorylated, but when grown on acetate or ethanol, the activity of IDH declines drastically concomitant with its phosphorylation. The protein is Isocitrate dehydrogenase kinase/phosphatase of Acidovorax sp. (strain JS42).